The chain runs to 347 residues: Succinylglutamate desuccinylase (347 aa).

Residues His-64, Glu-67, and His-159 each coordinate Zn(2+). The active site involves Glu-222.

It belongs to the AspA/AstE family. Succinylglutamate desuccinylase subfamily. Zn(2+) is required as a cofactor.

It catalyses the reaction N-succinyl-L-glutamate + H2O = L-glutamate + succinate. It functions in the pathway amino-acid degradation; L-arginine degradation via AST pathway; L-glutamate and succinate from L-arginine: step 5/5. In terms of biological role, transforms N(2)-succinylglutamate into succinate and glutamate. The sequence is that of Succinylglutamate desuccinylase from Burkholderia cenocepacia (strain ATCC BAA-245 / DSM 16553 / LMG 16656 / NCTC 13227 / J2315 / CF5610) (Burkholderia cepacia (strain J2315)).